The following is a 49-amino-acid chain: Large ribosomal subunit protein bL32 (49 aa).

This sequence belongs to the bacterial ribosomal protein bL32 family.

This is Large ribosomal subunit protein bL32 from Nautilia profundicola (strain ATCC BAA-1463 / DSM 18972 / AmH).